A 292-amino-acid polypeptide reads, in one-letter code: Glycine--tRNA ligase alpha subunit (292 aa).

Belongs to the class-II aminoacyl-tRNA synthetase family. Tetramer of two alpha and two beta subunits.

The protein localises to the cytoplasm. The catalysed reaction is tRNA(Gly) + glycine + ATP = glycyl-tRNA(Gly) + AMP + diphosphate. This chain is Glycine--tRNA ligase alpha subunit, found in Clostridioides difficile (strain 630) (Peptoclostridium difficile).